A 613-amino-acid chain; its full sequence is UBX domain-containing protein 3 (613 aa).

2 disordered regions span residues Pro67–Pro223 and Met453–Gln472. Over residues Ala68–Arg82 the composition is skewed to low complexity. The span at Thr137–Arg149 shows a compositional bias: basic residues. Over residues Ser158–Ser169 the composition is skewed to low complexity. The stretch at Arg452–Thr517 forms a coiled coil. The region spanning Pro531–Val610 is the UBX domain. The Interaction with cdc-48 motif lies at Phe582–Lys584.

In terms of assembly, forms a complex composed of ubxn-3, cdc-48.1, ufd-1 and npl-4.1. Forms a complex composed of ubxn-3, cdc-48.1 and/or cdc-48.2 and substrate cdt-1. Interacts (via FPK motif) with cdc-48.1 (via N-terminus) and cdc-48.2 (via N-terminus). Interacts (via N-terminus) with cdt-1 and ubiquitinated protein substrates; the interaction is cdc-48-independent. May interact with npl-4.1. Expressed in the germline (at protein level). Expressed in spermatocytes but not in mature sperm (at protein level). Expressed in the spermatheca and nerve cells.

It localises to the nucleus. Its subcellular location is the cytoplasm. It is found in the perinuclear region. The protein resides in the chromosome. In terms of biological role, ubiquitin-binding protein which acts as an adapter for ATPase cdc-48.1 and/or cdc-48.2, conferring substrate specificity. Together with ubxn-1 and ubxn-2, plays a role in hermaphrodite spermatogenesis probably by promoting the degradation of sex determination terminal factor tra-1. During mitosis, ensures the degradation of DNA licensing factor cdt-1 and the disassembly of the DNA replication CMG helicase complex by promoting the dissociation from chromatin of several of its components including cdc-45 and sld-5. This chain is UBX domain-containing protein 3, found in Caenorhabditis elegans.